The sequence spans 155 residues: Small ribosomal subunit protein uS9 (155 aa).

The protein belongs to the universal ribosomal protein uS9 family.

This is Small ribosomal subunit protein uS9 from Sinorhizobium fredii (strain NBRC 101917 / NGR234).